Consider the following 180-residue polypeptide: Crossover junction endodeoxyribonuclease RuvC (180 aa).

Residues aspartate 7, glutamate 66, and aspartate 138 contribute to the active site. Mg(2+) is bound by residues aspartate 7, glutamate 66, and aspartate 138.

The protein belongs to the RuvC family. Homodimer which binds Holliday junction (HJ) DNA. The HJ becomes 2-fold symmetrical on binding to RuvC with unstacked arms; it has a different conformation from HJ DNA in complex with RuvA. In the full resolvosome a probable DNA-RuvA(4)-RuvB(12)-RuvC(2) complex forms which resolves the HJ. It depends on Mg(2+) as a cofactor.

It is found in the cytoplasm. The catalysed reaction is Endonucleolytic cleavage at a junction such as a reciprocal single-stranded crossover between two homologous DNA duplexes (Holliday junction).. Its function is as follows. The RuvA-RuvB-RuvC complex processes Holliday junction (HJ) DNA during genetic recombination and DNA repair. Endonuclease that resolves HJ intermediates. Cleaves cruciform DNA by making single-stranded nicks across the HJ at symmetrical positions within the homologous arms, yielding a 5'-phosphate and a 3'-hydroxyl group; requires a central core of homology in the junction. The consensus cleavage sequence is 5'-(A/T)TT(C/G)-3'. Cleavage occurs on the 3'-side of the TT dinucleotide at the point of strand exchange. HJ branch migration catalyzed by RuvA-RuvB allows RuvC to scan DNA until it finds its consensus sequence, where it cleaves and resolves the cruciform DNA. This Burkholderia pseudomallei (strain 1710b) protein is Crossover junction endodeoxyribonuclease RuvC.